The primary structure comprises 1170 residues: Thrombospondin-2 (1170 aa).

An N-terminal signal peptide occupies residues 1 to 18 (MLWPLLLLALWAWPSAQA). A Laminin G-like domain is found at 19-215 (GDQDEDTAFD…LQNVYLVFEN (197 aa)). Residues 19–232 (GDQDEDTAFD…KKGCQQSQGA (214 aa)) are heparin-binding. 3 N-linked (GlcNAc...) asparagine glycosylation sites follow: Asn-151, Asn-316, and Asn-330. Residues 318-375 (SACWQDGRFFAENETWVVDSCTKCTCKKFKTVCHQISCPPATCADPWFVEGECCPSCV) form the VWFC domain. TSP type-1 domains lie at 379 to 429 (EEGW…GRCD), 435 to 490 (DGGW…PPCP), and 492 to 547 (DGRW…KSCP). Disulfide bonds link Cys-391-Cys-423, Cys-395-Cys-428, Cys-406-Cys-413, Cys-447-Cys-484, Cys-451-Cys-489, Cys-462-Cys-474, Cys-504-Cys-541, Cys-508-Cys-546, Cys-519-Cys-531, Cys-551-Cys-562, Cys-556-Cys-572, Cys-575-Cys-586, Cys-592-Cys-608, Cys-599-Cys-617, Cys-620-Cys-644, Cys-650-Cys-663, Cys-657-Cys-676, Cys-678-Cys-689, Cys-705-Cys-713, Cys-718-Cys-738, Cys-754-Cys-774, Cys-777-Cys-797, Cys-813-Cys-833, Cys-836-Cys-856, Cys-874-Cys-894, and Cys-910-Cys-930. Asn-455 is a glycosylation site (N-linked (GlcNAc...) asparagine). The region spanning 547 to 587 (PIDGCLSNPCFPGAECSSFPDGSWSCGSCPGGFLGNGTHCE) is the EGF-like 1 domain. The N-linked (GlcNAc...) asparagine glycan is linked to Asn-582. One can recognise an EGF-like 2 domain in the interval 646 to 690 (PENPCKDKTHSCHRHAECIYLGHFSDPMYKCECQTGYAGDGLICG). TSP type-3 repeat units follow at residues 691–726 (EDSD…NSGQ), 727–762 (EDFD…NPRQ), 763–785 (FDYD…NPAQ), 786–821 (IDTD…NTDQ), 822–844 (RDTD…NPDQ), 845–882 (TDVD…NANQ), 883–918 (ADHD…NPDQ), and 919–954 (EDSD…AISE). Asn-708 carries an N-linked (GlcNAc...) asparagine glycan. The disordered stretch occupies residues 731–750 (KDGIGDACDDDDDNDGVSDE). The segment covering 737 to 747 (ACDDDDDNDGV) has biased composition (acidic residues). The tract at residues 841-944 (NPDQTDVDND…DNDSIPDIDD (104 aa)) is disordered. Acidic residues-rich tracts occupy residues 845-864 (TDVD…DIDE) and 894-903 (CDSDDDNDGI). Residues 923–933 (GDRRGDACKDD) are compositionally biased toward basic and acidic residues. Positions 926–928 (RGD) match the Cell attachment site motif. Residues 934-944 (FDNDSIPDIDD) are compositionally biased toward acidic residues. Residues Asn-936 and Asn-1067 are each glycosylated (N-linked (GlcNAc...) asparagine). A disulfide bridge links Cys-946 with Cys-1167. The TSP C-terminal domain occupies 958 to 1170 (RNFQMVHLDP…SDLKYECRDV (213 aa)).

Belongs to the thrombospondin family. Homotrimer; disulfide-linked. Can bind to fibrinogen, fibronectin, laminin and type V collagen. Interacts (via the TSP type I repeats) with CD36; the interaction conveys an antiangiogenic effect. Interacts (via the TSP type I repeats) with HRG; the interaction blocks the antiangiogenic effect of THBS2 with CD36.

Functionally, adhesive glycoprotein that mediates cell-to-cell and cell-to-matrix interactions. Ligand for CD36 mediating antiangiogenic properties. The protein is Thrombospondin-2 (THBS2) of Bos taurus (Bovine).